Here is a 377-residue protein sequence, read N- to C-terminus: Metallo-hydrolase mfmC (377 aa).

His126, His128, Asp130, His131, His209, and Asp233 together coordinate Zn(2+).

The protein belongs to the metallo-beta-lactamase superfamily.

It functions in the pathway secondary metabolite biosynthesis; terpenoid biosynthesis. In terms of biological role, metallo-hydrolase; part of the gene cluster that mediates the biosynthesis of the phthalide-terpenoid hybrid 11'-O-desmethylfendlerol. Within the pathway, mfma and mfmC act together to convert 3,5-dimethylorsellinic acid (DMOA) into the phthalide 5,7-dihydroxy-4-(hydroxymethyl)-6-methylphthalide. The biosynthesis of 11'-O-desmethylfendlerol begins with the NR-PKS mfmB that forms 3,5-dimethylorsellinic acid (DMOA), which is then transformed into the phthalide 5,7-dihydroxy-4-(hydroxymethyl)-6-methylphthalide by the cytochrome P450 monooxygenase mfmA and the hydrolase mfmC. Subsequently, the methyltransferase mfmE catalyzes 7-O-methylation to yield 5-hydroxy-4-(hydroxymethyl)-7-methoxy-6-methylphthalide, which undergoes C-3 hydroxylation by the cytochrome P450 monooxygenase mfmF. The resultant cyclopolic acid (2,5-dihydroxy-4-(hydroxymethyl)-7-methoxy-6-methylphthalide) is then farnesylated by the DMATS-type prenyltransferase mfmD to afford 5-O-farnesylcyclopolic acid. Finally, the Pyr4-family terpene cyclase mfmH cyclizes the farnesyl moiety of 5-O-farnesylcyclopolic acid into a drimane-like structure, thus completing the biosynthesis of 11'-O-desmethylfendlerol. This chain is Metallo-hydrolase mfmC, found in Annulohypoxylon moriforme (Filamentous fungus).